The following is an 874-amino-acid chain: MDYNVKDFGALGDGVSDDRVAIQAAIDAAHAAGGGTVYLPPGEYRVSAAGEPSDGCLTLRDNVYLAGAGMGQTVIKLVDGSAQKITGIVRSPFGEETSNFGMRDLTLDGNRANTVDKVDGWFNGYAPGQPGADRNVTIERVEVREMSGYGFDPHEQTINLVLRDSVAHHNGLDGFVADYQIGGTFENNVAYANDRHGFNIVTSTNDFVMRNNVAYGNGGNGLVVQRGSENLAHPENILIDGGSYYDNGLEGVLVKMSNNVTVQNADIHGNGSSGVRVYGAQGVQILGNQIHDNAKTAVAPEVLLQSYDDTLGVSGNYYTTLNTRVEGNTITGSANSTYGVQERNDGTDFSSLVGNTINGVQEAAHLYGPNSTVSGTVSAPPQGTDGNDVLIGSDVGEQISGGAGDDRLDGGAGDDLLDGGAGRDRLTGGLGADTFRFALREDSHRSPLGTFSDLILDFDPSQDKIDVSALGFIGLGNGYAGTLAVSLSADGLRTYLKSYDADAQGRSFELALDGNHAATLSAGNIVFAAATPVDPSAEAQPIVGSDLDDQLHGTLLGEEISGGGGADQLYGYGGGDLLDGGAGRDRLTGGEGADTFRFALREDSHRSAAGTFSDLILDFDPTQDKLDVSALGFTGLGNGYAGTLAVSVSDDGTRTYLKSYETDAEGRSFEVSLQGNHAAALSADNILFATPVPVDPGVEGTPVVGSDLDDELHGTLGSEQILGGGGADQLYGYAGNDLLDGGAGRDKLSGGEGADTFRFALREDSHRSPLGTFGDRILDFDPSQDRIDVSALGFSGLGNGYAGSLAVSVSDDGTRTYLKSYEADAQGLSFEVALEGDHAAALSADNIVFAATDAAAAGELGVIGASGQPDDPAV.

8 PbH1 repeats span residues 133 to 155, 157 to 179, 180 to 202, 204 to 226, 234 to 256, 257 to 279, 280 to 302, and 320 to 351; these read DRNVTIERVEVREMSGYGFDPHE, TINLVLRDSVAHHNGLDGFVADY, QIGGTFENNVAYANDRHGFNIVT, TNDFVMRNNVAYGNGGNGLVVQR, PENILIDGGSYYDNGLEGVLVKM, SNNVTVQNADIHGNGSSGVRVYG, AQGVQILGNQIHDNAKTAVAPEV, and TLNTRVEGNTITGSANSTYGVQERNDGTDFSS. Hemolysin-type calcium-binding repeat units follow at residues 383-394, 401-417, 419-435, 562-578, 580-596, 723-739, and 741-757; these read GTDGNDVLIGSD, GGAGDDRLDGGAGDDLL, GGAGRDRLTGGLGADTF, GGGGADQLYGYGGGDLL, GGAGRDRLTGGEGADTF, GGGGADQLYGYAGNDLL, and GGAGRDKLSGGEGADTF. The disordered stretch occupies residues 401-420; it reads GGAGDDRLDGGAGDDLLDGG.

The protein belongs to the D-mannuronate C5-epimerase family. Ca(2+) serves as cofactor.

Its subcellular location is the secreted. The catalysed reaction is [(1-&gt;4)-beta-D-mannuronosyl](n) = [alginate](n). Its pathway is glycan biosynthesis; alginate biosynthesis. Its activity is regulated as follows. Inhibited by zinc. Functionally, converts beta-D-mannuronic acid (M) to alpha-L-guluronic acid (G), producing a polymer with gel-forming capacity, required for the formation of the cyst coat. The sequence is that of Mannuronan C5-epimerase AlgE6 from Azotobacter vinelandii.